Consider the following 92-residue polypeptide: C-C motif chemokine 4 (92 aa).

Residues 1–23 form the signal peptide; sequence MKLCVTVLSLLVLVAAFCSPALS. 2 disulfide bridges follow: cysteine 34–cysteine 58 and cysteine 35–cysteine 74.

It belongs to the intercrine beta (chemokine CC) family. As to quaternary structure, homodimer. Interacts with CCR5.

It localises to the secreted. Monokine with inflammatory and chemokinetic properties. This chain is C-C motif chemokine 4 (CCL4), found in Canis lupus familiaris (Dog).